We begin with the raw amino-acid sequence, 92 residues long: Small ribosomal subunit protein uS19c (92 aa).

The protein belongs to the universal ribosomal protein uS19 family.

Its subcellular location is the plastid. Protein S19 forms a complex with S13 that binds strongly to the 16S ribosomal RNA. The sequence is that of Small ribosomal subunit protein uS19c from Cuscuta gronovii (Common dodder).